A 116-amino-acid polypeptide reads, in one-letter code: Aspartate 1-decarboxylase (116 aa).

S25 serves as the catalytic Schiff-base intermediate with substrate; via pyruvic acid. S25 bears the Pyruvic acid (Ser) mark. T57 lines the substrate pocket. Y58 (proton donor) is an active-site residue. 73–75 (GPA) is a binding site for substrate.

The protein belongs to the PanD family. Heterooctamer of four alpha and four beta subunits. Pyruvate serves as cofactor. In terms of processing, is synthesized initially as an inactive proenzyme, which is activated by self-cleavage at a specific serine bond to produce a beta-subunit with a hydroxyl group at its C-terminus and an alpha-subunit with a pyruvoyl group at its N-terminus.

It localises to the cytoplasm. The catalysed reaction is L-aspartate + H(+) = beta-alanine + CO2. The protein operates within cofactor biosynthesis; (R)-pantothenate biosynthesis; beta-alanine from L-aspartate: step 1/1. Catalyzes the pyruvoyl-dependent decarboxylation of aspartate to produce beta-alanine. This Flavobacterium psychrophilum (strain ATCC 49511 / DSM 21280 / CIP 103535 / JIP02/86) protein is Aspartate 1-decarboxylase.